The following is a 311-amino-acid chain: Iron-binding protein YfeA (311 aa).

The N-terminal stretch at Met1–Ala31 is a signal peptide. Positions 76, 141, 207, and 282 each coordinate Fe(2+).

Belongs to the bacterial solute-binding protein 9 family. In terms of assembly, monomer.

The protein resides in the periplasm. Functionally, part of the ATP-binding cassette (ABC) transport system YfeABC involved in iron import. Binds iron with high affinity and specificity and delivers it to the membrane permease for translocation into the cytoplasm. Also binds Mn(2+) and Zn(2+). This Yersinia pestis protein is Iron-binding protein YfeA (yfeA).